The chain runs to 184 residues: Tumor necrosis factor alpha-induced protein 8-like protein 2 (184 aa).

This sequence belongs to the TNFAIP8 family. TNFAIP8L2 subfamily. In terms of assembly, may interact with CASP8; however, such result is unclear since could not reproduce the interaction with CASP8. Interacts with RAC1. Post-translationally, ubiquitinated in a BTRC-depdent manner; leading to degradation mediated through the proteasome pathway.

The protein resides in the cytoplasm. It is found in the nucleus. The protein localises to the lysosome. Its function is as follows. Acts as a negative regulator of innate and adaptive immunity by maintaining immune homeostasis. Plays a regulatory role in the Toll-like signaling pathway by determining the strength of LPS-induced signaling and gene expression. Inhibits TCR-mediated T-cell activation and negatively regulate T-cell function to prevent hyperresponsiveness. Also inhibits autolysosome formation via negatively modulating MTOR activation by interacting with RAC1 and promoting the disassociation of the RAC1-MTOR complex. Plays an essential role in NK-cell biology by acting as a checkpoint and displaying an expression pattern correlating with NK-cell maturation process and by negatively regulating NK-cell maturation and antitumor immunity. Mechanistically, suppresses IL-15-triggered mTOR activity in NK-cells. This Rhinolophus ferrumequinum (Greater horseshoe bat) protein is Tumor necrosis factor alpha-induced protein 8-like protein 2 (TNFAIP8L2).